A 54-amino-acid polypeptide reads, in one-letter code: Large ribosomal subunit protein bL32 (54 aa).

Residues M1–H26 are disordered. A compositionally biased stretch (basic residues) spans K7–R16.

It belongs to the bacterial ribosomal protein bL32 family.

This Buchnera aphidicola subsp. Acyrthosiphon pisum (strain 5A) protein is Large ribosomal subunit protein bL32.